A 475-amino-acid polypeptide reads, in one-letter code: Bifunctional protein HldE (475 aa).

The segment at 1 to 318 (MMQYSLKFNQ…ENAIHHREET (318 aa)) is ribokinase. 195–198 (NMAE) serves as a coordination point for ATP. Asp264 is a catalytic residue. Positions 344–475 (MTNGCFDILH…DVIKKIQAIR (132 aa)) are cytidylyltransferase.

It in the N-terminal section; belongs to the carbohydrate kinase PfkB family. In the C-terminal section; belongs to the cytidylyltransferase family. Homodimer.

It catalyses the reaction D-glycero-beta-D-manno-heptose 7-phosphate + ATP = D-glycero-beta-D-manno-heptose 1,7-bisphosphate + ADP + H(+). The catalysed reaction is D-glycero-beta-D-manno-heptose 1-phosphate + ATP + H(+) = ADP-D-glycero-beta-D-manno-heptose + diphosphate. The protein operates within nucleotide-sugar biosynthesis; ADP-L-glycero-beta-D-manno-heptose biosynthesis; ADP-L-glycero-beta-D-manno-heptose from D-glycero-beta-D-manno-heptose 7-phosphate: step 1/4. Its pathway is nucleotide-sugar biosynthesis; ADP-L-glycero-beta-D-manno-heptose biosynthesis; ADP-L-glycero-beta-D-manno-heptose from D-glycero-beta-D-manno-heptose 7-phosphate: step 3/4. It functions in the pathway bacterial outer membrane biogenesis; LOS core biosynthesis. Its function is as follows. Catalyzes the phosphorylation of D-glycero-D-manno-heptose 7-phosphate at the C-1 position to selectively form D-glycero-beta-D-manno-heptose-1,7-bisphosphate. In terms of biological role, catalyzes the ADP transfer from ATP to D-glycero-beta-D-manno-heptose 1-phosphate, yielding ADP-D-glycero-beta-D-manno-heptose. The polypeptide is Bifunctional protein HldE (Haemophilus ducreyi (strain 35000HP / ATCC 700724)).